We begin with the raw amino-acid sequence, 282 residues long: Pantothenate synthetase (282 aa).

30 to 37 lines the ATP pocket; it reads MGFLHDGH. His37 functions as the Proton donor in the catalytic mechanism. Residue Gln60 coordinates (R)-pantoate. A beta-alanine-binding site is contributed by Gln60. Position 146 to 149 (146 to 149) interacts with ATP; that stretch reads GQKD. A (R)-pantoate-binding site is contributed by Gln152. ATP is bound by residues Ile175 and 183–186; that span reads KSSR.

This sequence belongs to the pantothenate synthetase family. In terms of assembly, homodimer.

Its subcellular location is the cytoplasm. It catalyses the reaction (R)-pantoate + beta-alanine + ATP = (R)-pantothenate + AMP + diphosphate + H(+). It functions in the pathway cofactor biosynthesis; (R)-pantothenate biosynthesis; (R)-pantothenate from (R)-pantoate and beta-alanine: step 1/1. Catalyzes the condensation of pantoate with beta-alanine in an ATP-dependent reaction via a pantoyl-adenylate intermediate. This Campylobacter jejuni subsp. jejuni serotype O:23/36 (strain 81-176) protein is Pantothenate synthetase.